A 199-amino-acid polypeptide reads, in one-letter code: Phycocyanobilin lyase CpcT (199 aa).

Belongs to the CpcT/CpeT biliprotein lyase family.

In terms of biological role, catalyzes the site-selective attachment of phycocyanobilin (PCB) to 'Cys-154' of C-phycocyanin subunit beta (CpcB) and to 'Cys-153' of phycoerythrocyanin subunit beta (PecB). Does not have chromophore lyase activity for ApcA1, ApcA2, ApcB, ApcD, ApcF or PecA. The sequence is that of Phycocyanobilin lyase CpcT (cpcT1) from Nostoc sp. (strain PCC 7120 / SAG 25.82 / UTEX 2576).